We begin with the raw amino-acid sequence, 48 residues long: Large ribosomal subunit protein eL40 (48 aa).

It belongs to the eukaryotic ribosomal protein eL40 family.

In Methanosphaerula palustris (strain ATCC BAA-1556 / DSM 19958 / E1-9c), this protein is Large ribosomal subunit protein eL40.